Here is a 162-residue protein sequence, read N- to C-terminus: Phospholipase A2 (162 aa).

The N-terminal stretch at 1 to 22 (MKVLQMFFCVILLCVTSVLVEA) is a signal peptide. Positions 23–35 (KSTTKGDETASKR) are excised as a propeptide. Intrachain disulfides connect Cys-60–Cys-155, Cys-62–Cys-78, Cys-77–Cys-134, Cys-84–Cys-127, Cys-94–Cys-120, and Cys-113–Cys-125. 3 residues coordinate Ca(2+): Tyr-61, Gly-63, and Gly-65. His-81 is a catalytic residue. Asp-82 contributes to the Ca(2+) binding site. Asp-128 is a catalytic residue.

Belongs to the phospholipase A2 family. Group I subfamily. D49 sub-subfamily. It depends on Ca(2+) as a cofactor. In terms of tissue distribution, expressed both outside and in acontia, a specialised envenomation structure laden with batteries of venom-containing nematocysts found only in the superfamily Metridioidea.

It is found in the secreted. The protein localises to the nematocyst. It carries out the reaction a 1,2-diacyl-sn-glycero-3-phosphocholine + H2O = a 1-acyl-sn-glycero-3-phosphocholine + a fatty acid + H(+). In terms of biological role, PLA2 catalyzes the calcium-dependent hydrolysis of the 2-acyl groups in 3-sn-phosphoglycerides. This is Phospholipase A2 from Calliactis polypus (Hermit crab anemone).